Here is a 176-residue protein sequence, read N- to C-terminus: Peptide deformylase (176 aa).

Fe cation contacts are provided by Cys-95 and His-137. The active site involves Glu-138. His-141 provides a ligand contact to Fe cation.

This sequence belongs to the polypeptide deformylase family. Fe(2+) serves as cofactor.

It catalyses the reaction N-terminal N-formyl-L-methionyl-[peptide] + H2O = N-terminal L-methionyl-[peptide] + formate. Functionally, removes the formyl group from the N-terminal Met of newly synthesized proteins. Requires at least a dipeptide for an efficient rate of reaction. N-terminal L-methionine is a prerequisite for activity but the enzyme has broad specificity at other positions. The chain is Peptide deformylase from Hyphomonas neptunium (strain ATCC 15444).